A 183-amino-acid chain; its full sequence is Capsid protein (183 aa).

The interval 136–183 (NAPILSTLPETTVVRRRGRSPRRRTPSPRRRRSQSPRRRRSQSRESQC) is disordered. Residues 149–176 (VRRRGRSPRRRTPSPRRRRSQSPRRRRS) show a composition bias toward basic residues. 3 positions are modified to phosphoserine; by host: S155, S162, and S170. Residues 155-161 (SPRRRTP) form a 1; half-length repeat. Residues 155-177 (SPRRRTPSPRRRRSQSPRRRRSQ) form a 3 X 8 AA repeats of S-P-R-R-R-[PR]-S-Q region. A Bipartite nuclear localization signal motif is present at residues 158 to 175 (RRTPSPRRRRSQSPRRRR). 2 tandem repeats follow at residues 162 to 169 (SPRRRRSQ) and 170 to 177 (SPRRRRSQ). An RNA binding region spans residues 177 to 183 (QSRESQC).

The protein belongs to the orthohepadnavirus core antigen family. In terms of assembly, homodimerizes, then multimerizes. Interacts with cytosol exposed regions of viral L glycoprotein present in the reticulum-to-Golgi compartment. Interacts with human FLNB. Phosphorylated form interacts with host importin alpha; this interaction depends on the exposure of the NLS, which itself depends upon genome maturation and/or phosphorylation of the capsid protein. Interacts with host NUP153. Post-translationally, phosphorylated by host SRPK1, SRPK2, and maybe protein kinase C or GAPDH. Phosphorylation is critical for pregenomic RNA packaging. Protein kinase C phosphorylation is stimulated by HBx protein and may play a role in transport of the viral genome to the nucleus at the late step during the viral replication cycle.

It localises to the virion. The protein localises to the host cytoplasm. Its function is as follows. Self assembles to form an icosahedral capsid. Most capsids appear to be large particles with an icosahedral symmetry of T=4 and consist of 240 copies of capsid protein, though a fraction forms smaller T=3 particles consisting of 180 capsid proteins. Entering capsids are transported along microtubules to the nucleus. Phosphorylation of the capsid is thought to induce exposure of nuclear localization signal in the C-terminal portion of the capsid protein that allows binding to the nuclear pore complex via the importin (karyopherin-) alpha and beta. Capsids are imported in intact form through the nuclear pore into the nuclear basket, where it probably binds NUP153. Only capsids that contain the mature viral genome can release the viral DNA and capsid protein into the nucleoplasm. Immature capsids get stuck in the basket. Capsids encapsulate the pre-genomic RNA and the P protein. Pre-genomic RNA is reverse-transcribed into DNA while the capsid is still in the cytoplasm. The capsid can then either be directed to the nucleus, providing more genomes for transcription, or bud through the endoplasmic reticulum to provide new virions. The protein is Capsid protein of Hepatitis B virus genotype D subtype ayw (isolate France/Tiollais/1979) (HBV-D).